The primary structure comprises 304 residues: Acetylglutamate kinase (304 aa).

Residues 69-70, R91, and N202 each bind substrate; that span reads GG.

It belongs to the acetylglutamate kinase family. ArgB subfamily.

It localises to the cytoplasm. It catalyses the reaction N-acetyl-L-glutamate + ATP = N-acetyl-L-glutamyl 5-phosphate + ADP. It functions in the pathway amino-acid biosynthesis; L-arginine biosynthesis; N(2)-acetyl-L-ornithine from L-glutamate: step 2/4. Its function is as follows. Catalyzes the ATP-dependent phosphorylation of N-acetyl-L-glutamate. The polypeptide is Acetylglutamate kinase (Caulobacter vibrioides (strain ATCC 19089 / CIP 103742 / CB 15) (Caulobacter crescentus)).